The following is a 758-amino-acid chain: POU domain, class 2, transcription factor 1 (758 aa).

Polar residues-rich tracts occupy residues 1–10 (MKLHSSSKIQ), 19–30 (RMNNPSETSKSP), and 275–285 (VQQLPQSQTTP). 5 disordered regions span residues 1 to 43 (MKLH…QTNG), 271 to 296 (AATPVQQLPQSQTTPKRIDTPSLEEP), 377 to 398 (TNQSVLNSPGHGMEGLNRRRKK), 450 to 472 (EKRINPPSSGGSSSSPIKSLFSS), and 534 to 573 (SVLTSPSLSSSPSATAASSEASTAGETSTTQTTSTPMTSS). A POU-specific domain is found at 294–368 (EEPSDLEELE…LLEKWLNDAE (75 aa)). The segment at residues 395–454 (RRKKRTSIETNIRVALEKSFLENQKPTSEEITMIADQLNMEKEVIRVWFCNRRQKEKRIN) is a DNA-binding region (homeobox). Residues 455-472 (PPSSGGSSSSPIKSLFSS) show a composition bias toward low complexity.

The protein belongs to the POU transcription factor family. Class-2 subfamily. As to expression, expressed in oocytes (at protein level). Expressed in the tadpole brain (at protein level).

The protein resides in the cytoplasm. It localises to the nucleus. Transcription factor that binds to the octamer motif (5'-ATTTGCAT-3') and activates the promoters of the genes of some small nuclear RNAs (snRNA) and histone H2B. In vitro does not bind to variant octamer sequences, such as the H2B octamer 5'-GTTTGCAT-3', although binding has been observed in vivo during early embryogenesis, suggesting that interactions between pou2f1 and other factors might be required for octamer-dependent H2B transcription. Acts downstream of Notch signaling during radial glia formation. May be important for gastrulation, possibly through the regulation of an FGF-type signaling pathway. In Xenopus laevis (African clawed frog), this protein is POU domain, class 2, transcription factor 1 (pou2f1).